Here is a 270-residue protein sequence, read N- to C-terminus: tRNA pseudouridine synthase A (270 aa).

Aspartate 51 acts as the Nucleophile in catalysis. Substrate is bound at residue tyrosine 109.

This sequence belongs to the tRNA pseudouridine synthase TruA family. As to quaternary structure, homodimer.

The catalysed reaction is uridine(38/39/40) in tRNA = pseudouridine(38/39/40) in tRNA. Functionally, formation of pseudouridine at positions 38, 39 and 40 in the anticodon stem and loop of transfer RNAs. This chain is tRNA pseudouridine synthase A, found in Variovorax paradoxus (strain S110).